The sequence spans 582 residues: Multicopper oxidase LPR1 homolog 1 (582 aa).

Positions 1 to 20 (MRAKVELAVLLLVLVGVAAG) are cleaved as a signal peptide. Residues H150, H152, H198, and H200 each contribute to the Cu cation site. N-linked (GlcNAc...) asparagine glycosylation is found at N256, N300, and N308. The 70-residue stretch at 285-354 (PFLAVARRRY…DVVVDFSQST (70 aa)) folds into the Plastocyanin-like domain. Residues H467, H470, and H472 each coordinate Cu cation. N504 carries N-linked (GlcNAc...) asparagine glycosylation. Residues H563, C564, H565, H569, and M574 each coordinate Cu cation.

The protein belongs to the multicopper oxidase family. The cofactor is Cu cation. In terms of tissue distribution, highly expressed in roots, and at lower levels in basal stems and leaf blades.

It localises to the endoplasmic reticulum membrane. In terms of biological role, multicopper oxidase that may play a role in the maintenance of inorganic phosphate homeostasis. This is Multicopper oxidase LPR1 homolog 1 from Oryza sativa subsp. japonica (Rice).